The chain runs to 134 residues: UPF0102 protein Adeh_1910 (134 aa).

It belongs to the UPF0102 family.

The protein is UPF0102 protein Adeh_1910 of Anaeromyxobacter dehalogenans (strain 2CP-C).